The following is a 173-amino-acid chain: Nanos homolog 3 (173 aa).

Residues 23–51 are disordered; sequence KEGPETRLSPQPEPEPMLEPDQKRSLESS. The Nanos-type zinc-finger motif lies at 57–111; it reads LCSFCKHNGESRAIYQSHVLKDEAGRVLCPILRDYVCPQCGATRERAHTRRFCPL. Zn(2+) is bound by residues cysteine 58, cysteine 61, histidine 74, cysteine 85, cysteine 93, cysteine 96, histidine 104, and cysteine 109. 2 consecutive short sequence motifs (C2HC) follow at residues 58-85 and 93-109; these read CSFCKHNGESRAIYQSHVLKDEAGRVLC and CPQCGATRERAHTRRFC. Residues 123–173 are disordered; it reads TTRNSAGKKLVRPDKAKTQDTGHRRGGGGGAGFRGAGKSEPSPSCSPSMST. A compositionally biased stretch (basic and acidic residues) spans 133 to 145; sequence VRPDKAKTQDTGH. The span at 161–173 shows a compositional bias: low complexity; sequence SEPSPSCSPSMST.

The protein belongs to the nanos family. In terms of assembly, binds mRNA from germ cells. Interacts with PUM2. Ovary, testis and brain (at protein level). In the ovaries, expressed during multiple stages of oogenesis, including primordial, primary, secondary and antral follicles with the highest expression in the oocytes. In the testis, expressed in germ cells, type A spermatogonia (SA), primary spermatocytes (S1), round spermatids (S3) and elongated spermatids.

It is found in the nucleus. Its subcellular location is the cytoplasm. The protein localises to the stress granule. It localises to the P-body. Plays a role in the maintenance of the undifferentiated state of germ cells regulating the spermatogonia cell cycle and inducing a prolonged transit in G1 phase. Affects cell proliferation probably by repressing translation of specific mRNAs. Maintains the germ cell lineage by suppressing both Bax-dependent and -independent apoptotic pathways. Essential in the early stage embryo to protect the migrating primordial germ cells (PGCs) from apoptosis. The sequence is that of Nanos homolog 3 (NANOS3) from Homo sapiens (Human).